We begin with the raw amino-acid sequence, 555 residues long: MSQMIRPPIVLLKEGTDTSQGLPQLISNINACCAIVDTVRTTLGPRGMDKLIYQSERQVTISNDGATVMKLLDIVHPAARTLVDIAKSQDSEVGDGTTSVVILAGEFLKAAKPFLEEGIHPQIIIRAFRSACELAKQKIQELSVDIKPENMREFLEKCASTSMNSKLIASHKQFFSKMVVDAVQLLDDNIDLDMIGIKKESGGGLGDSQFIAGAAFKRTFFYAGFEQQPKHIKNPKVLCLNIELELKAEKDNAEIRISDPTKYQSLVNAEWKLFFDKLEAIHASGVNVVLSKLAIGDLATQFFADKNMFCAGRVPDDDIRRVCRATGAAIQNTTSNIIPDVIGTCDLFEEVQVGGQRYNLFTGCTMTQTATIILRGGGEQFIDEAERSLHDSIMIVRRARKHRSVVAGGGAIEMEVSKYLRDYSLSIEGKKQLLINAFAKALEVIPRQIADNAGFDSTDILNQLRQKHAQGEKWFGVDIVNEGICDTYESAIWEPSLVKLNSIVAATEATCLILSVDETVQNNQAEQAQAGPQINNQTRQALSRGRGVQAMRGRG.

The protein belongs to the TCP-1 chaperonin family. In terms of assembly, heterooligomeric complex of about 850 to 900 kDa that forms two stacked rings, 12 to 16 nm in diameter.

The protein localises to the cytoplasm. In terms of biological role, molecular chaperone; assists the folding of proteins upon ATP hydrolysis. Known to play a role, in vitro, in the folding of actin and tubulin. The polypeptide is T-complex protein 1 subunit eta (cct7) (Dictyostelium discoideum (Social amoeba)).